Here is a 397-residue protein sequence, read N- to C-terminus: Acetate kinase 1 (397 aa).

Asparagine 8 provides a ligand contact to Mg(2+). Position 15 (lysine 15) interacts with ATP. Arginine 89 contacts substrate. Aspartate 146 functions as the Proton donor/acceptor in the catalytic mechanism. Residues 206–210 (HLGNG), 281–283 (DFR), and 329–333 (GVGEN) each bind ATP. Position 380 (glutamate 380) interacts with Mg(2+).

The protein belongs to the acetokinase family. In terms of assembly, homodimer. Mg(2+) serves as cofactor. Requires Mn(2+) as cofactor.

It is found in the cytoplasm. It carries out the reaction acetate + ATP = acetyl phosphate + ADP. It participates in metabolic intermediate biosynthesis; acetyl-CoA biosynthesis; acetyl-CoA from acetate: step 1/2. Catalyzes the formation of acetyl phosphate from acetate and ATP. Can also catalyze the reverse reaction. This chain is Acetate kinase 1, found in Listeria monocytogenes serotype 4b (strain F2365).